The primary structure comprises 78 residues: Acyl carrier protein (78 aa).

The region spanning 2 to 77 (SDIAERVKKI…DAVKFIEKAQ (76 aa)) is the Carrier domain. Ser37 carries the post-translational modification O-(pantetheine 4'-phosphoryl)serine.

The protein belongs to the acyl carrier protein (ACP) family. Post-translationally, 4'-phosphopantetheine is transferred from CoA to a specific serine of apo-ACP by AcpS. This modification is essential for activity because fatty acids are bound in thioester linkage to the sulfhydryl of the prosthetic group.

It is found in the cytoplasm. The protein operates within lipid metabolism; fatty acid biosynthesis. Functionally, carrier of the growing fatty acid chain in fatty acid biosynthesis. The protein is Acyl carrier protein of Sinorhizobium fredii (strain NBRC 101917 / NGR234).